The following is a 99-amino-acid chain: A-type ATP synthase subunit F (99 aa).

It belongs to the V-ATPase F subunit family. In terms of assembly, has multiple subunits with at least A(3), B(3), C, D, E, F, H, I and proteolipid K(x).

The protein resides in the cell membrane. Its function is as follows. Component of the A-type ATP synthase that produces ATP from ADP in the presence of a proton gradient across the membrane. The chain is A-type ATP synthase subunit F from Methanothrix thermoacetophila (strain DSM 6194 / JCM 14653 / NBRC 101360 / PT) (Methanosaeta thermophila).